The sequence spans 275 residues: Thiazole synthase (275 aa).

K108 serves as the catalytic Schiff-base intermediate with DXP. 1-deoxy-D-xylulose 5-phosphate contacts are provided by residues G169, 196 to 197 (AG), and 218 to 219 (NT).

It belongs to the ThiG family. Homotetramer. Forms heterodimers with either ThiH or ThiS.

The protein resides in the cytoplasm. The enzyme catalyses [ThiS sulfur-carrier protein]-C-terminal-Gly-aminoethanethioate + 2-iminoacetate + 1-deoxy-D-xylulose 5-phosphate = [ThiS sulfur-carrier protein]-C-terminal Gly-Gly + 2-[(2R,5Z)-2-carboxy-4-methylthiazol-5(2H)-ylidene]ethyl phosphate + 2 H2O + H(+). It participates in cofactor biosynthesis; thiamine diphosphate biosynthesis. Catalyzes the rearrangement of 1-deoxy-D-xylulose 5-phosphate (DXP) to produce the thiazole phosphate moiety of thiamine. Sulfur is provided by the thiocarboxylate moiety of the carrier protein ThiS. In vitro, sulfur can be provided by H(2)S. The sequence is that of Thiazole synthase from Ralstonia nicotianae (strain ATCC BAA-1114 / GMI1000) (Ralstonia solanacearum).